The sequence spans 120 residues: NADH-ubiquinone oxidoreductase chain 3 (120 aa).

The next 3 membrane-spanning stretches (helical) occupy residues 10–30, 62–82, and 89–109; these read ILIL…LGYF, FYLV…LFPF, and MTLF…IGFI.

The protein belongs to the complex I subunit 3 family.

It localises to the mitochondrion membrane. It carries out the reaction a ubiquinone + NADH + 5 H(+)(in) = a ubiquinol + NAD(+) + 4 H(+)(out). Functionally, core subunit of the mitochondrial membrane respiratory chain NADH dehydrogenase (Complex I) that is believed to belong to the minimal assembly required for catalysis. Complex I functions in the transfer of electrons from NADH to the respiratory chain. The immediate electron acceptor for the enzyme is believed to be ubiquinone. The chain is NADH-ubiquinone oxidoreductase chain 3 (nad3) from Dictyostelium citrinum (Slime mold).